Consider the following 425-residue polypeptide: Serine/threonine transporter SstT (425 aa).

The next 9 membrane-spanning stretches (helical) occupy residues 11–31 (FLNGSLVLQIVIGIVAGLILA), 43–63 (FLGSLFVSALKAVAPILVFVL), 91–111 (LFAASTAVMVSYFFPTTLVLV), 141–161 (ALVSGNFIGILAWAAGLGFAL), 182–202 (IVHLVIRFAPLGIFGLVAGTI), 216–236 (LLAVLLGCMILIALVINPIIV), 290–310 (IPLGATINMAGASITITVLTL), 316–336 (LGIEFDIATAILLSVVAAVSA), and 363–383 (VAMQVVAIGFIIGVVQDSAET).

Belongs to the dicarboxylate/amino acid:cation symporter (DAACS) (TC 2.A.23) family.

It localises to the cell inner membrane. The catalysed reaction is L-serine(in) + Na(+)(in) = L-serine(out) + Na(+)(out). It carries out the reaction L-threonine(in) + Na(+)(in) = L-threonine(out) + Na(+)(out). Its function is as follows. Involved in the import of serine and threonine into the cell, with the concomitant import of sodium (symport system). This Psychromonas ingrahamii (strain DSM 17664 / CCUG 51855 / 37) protein is Serine/threonine transporter SstT.